A 916-amino-acid polypeptide reads, in one-letter code: MLTNIAKKIFGSRNDRLLKQYRKSVARINALEEQMQALSDADLQAKTAEFKQRLADGQTLDGILPEAFAVCREASRRTLGMRHFDVQLIGGMVLHDGKIAEMRTGEGKTLVATLAVYLNALAGKGVHVVTVNDYLASRDAGIMEPLYNFLGLTVGVIISDMQPFDRQNAYAADITYGTNNEFGFDYLRDNMVTDQYDKVQRELNFAVVDEVDSILIDEARTPLIISGQADDNIQLYQIMNTVPPHLVRQETEEGEGDYWVDEKAHQVILSEAGHEHAEQILTQMGLLAENDSLYSAANIALMHHLMAALRAHSLFHKDQHYVIQDGEIVIVDEFTGRLMSGRRWSEGLHQAVEAKEGVEIKRENQTLASITFQNYFRLYTKLSGMTGTADTEAFEFQSIYNLETVIIPTNRPVQRKDFNDQIFRSAEEKFEAVVKDIEECHKRGQPVLVGTTSIENSELVSHLLQKAGLPHNVLNAKEHEREALIVAQAGKVGAITVATNMAGRGTDIVLGGNLKHQTDAIRADETLSDEEKQAQIAALENGWQAEHDKVMEAGGLHIIGTERHESRRIDNQLRGRSGRQGDPGSSRFYLSFEDPLLRLFALDRAAAILNRLAPERGVAIEHNLLTRQIEGAQRKVEGRNFDMRKQVLEYDDVANEQRKVIYSQRNEILTSKDISDLMQEIRSDVVSDLVDTYMPPDSMEEQWDIPTLENRLAAEFRLHEDIQSWLKADNAIDGQDIKERLIERIENEYAAKTELVGKQAMADFERNVMLQVIDNQWREHLAAMDYLRQGIHLRSYAQKNPKQEYKREAFTMFQDLWNGIKFHIASLLTSVQIEQNPVAVVEEQPIGNIQSIHSESPDMEELLGQSQTDLVTEAFNPDGTDFSPEALEARGQIVHRNDPCPCGSGLKYKQCHGKLA.

ATP is bound by residues Gln-87, Gly-105–Thr-109, and Asp-507. Cys-900, Cys-902, Cys-911, and His-912 together coordinate Zn(2+).

It belongs to the SecA family. Monomer and homodimer. Part of the essential Sec protein translocation apparatus which comprises SecA, SecYEG and auxiliary proteins SecDF-YajC and YidC. Requires Zn(2+) as cofactor.

It is found in the cell inner membrane. Its subcellular location is the cytoplasm. It carries out the reaction ATP + H2O + cellular proteinSide 1 = ADP + phosphate + cellular proteinSide 2.. In terms of biological role, part of the Sec protein translocase complex. Interacts with the SecYEG preprotein conducting channel. Has a central role in coupling the hydrolysis of ATP to the transfer of proteins into and across the cell membrane, serving both as a receptor for the preprotein-SecB complex and as an ATP-driven molecular motor driving the stepwise translocation of polypeptide chains across the membrane. The chain is Protein translocase subunit SecA from Neisseria meningitidis serogroup C (strain 053442).